A 321-amino-acid chain; its full sequence is Beta-ketoacyl-[acyl-carrier-protein] synthase III (321 aa).

Residues Cys-115 and His-248 contribute to the active site. The tract at residues 249-253 (QANIR) is ACP-binding. Residue Asn-278 is part of the active site.

The protein belongs to the thiolase-like superfamily. FabH family. In terms of assembly, homodimer.

The protein localises to the cytoplasm. It catalyses the reaction malonyl-[ACP] + acetyl-CoA + H(+) = 3-oxobutanoyl-[ACP] + CO2 + CoA. The protein operates within lipid metabolism; fatty acid biosynthesis. Catalyzes the condensation reaction of fatty acid synthesis by the addition to an acyl acceptor of two carbons from malonyl-ACP. Catalyzes the first condensation reaction which initiates fatty acid synthesis and may therefore play a role in governing the total rate of fatty acid production. Possesses both acetoacetyl-ACP synthase and acetyl transacylase activities. Its substrate specificity determines the biosynthesis of branched-chain and/or straight-chain of fatty acids. This Azoarcus sp. (strain BH72) protein is Beta-ketoacyl-[acyl-carrier-protein] synthase III.